We begin with the raw amino-acid sequence, 361 residues long: MSTSSQSYPMSGGDDQHSYIHNSSYQKAGIDGVQEKARQYILENLDLLNMNPNLSTFTIADFGCSIGPNTFHAVQNIIDIVKLKHLKESQEDSRVAPLEFQVYFNDLPNNDFNTLFRTQPPSSKQEYFSVGVPGSFYGRVLPRNSIHIGNTSFTTHWLSKVPEEVCDKNSLAWNKNYIHCNNLIEEVTEAYKVQFEKDMGVFLKARAEELVPGGLMITLGQCLPDGVAMYETWSGIVKDTIGDCLQDMATLGVTTEEKIEMFNLPVYFPQVSELKGAIEQNIRFTIEMMEIVSHPLEAVQLSNNFITSMYRAILSTVIERHFGGSVVDELFRQFAKKLSEHPIDFEKCKKQMVYHIVLKRK.

Residues Tyr19, Cys64, Asn69, Asp106, Leu107, Ser135, and Phe136 each contribute to the S-adenosyl-L-homocysteine site. Residues Asn174, Glu260, Phe262, and Asn263 each coordinate Mg(2+).

The protein belongs to the methyltransferase superfamily. Type-7 methyltransferase family. Homodimer. Mg(2+) is required as a cofactor.

The chain is Probable S-adenosylmethionine-dependent methyltransferase At5g38780 from Arabidopsis thaliana (Mouse-ear cress).